The sequence spans 333 residues: MIDITLPLTDIHRHLDGNIRAQTILDLGRQFNIALPAQTLETLIPHVQVTSTEPDLVSFLTKLDWGVKVLASLDACRRVAFENIEDAARNGLHYVELRFSPGYMAMAHQLPIAGVVEAVIDGVRDGCNTFGVEARLIGIMSRTFGEAACLQELDALLAHREKITALDLAGDELGFPGSLFLSHFNRARDAGWHITVHAGEAAGPESIWQAIRELGAERIGHGVKAVEDRALMDFLAQQRIGIESCLTSNIQTSTVASLADHPLKTFLEHGVLASLNTDDPAVQGVDIIHEYHVAAPAAGLSREQIRQAQINGLEIAFLSDGEKRALREKVAAA.

Residues H12 and H14 each coordinate Zn(2+). Substrate-binding residues include H14, D16, and G170. Residue H197 participates in Zn(2+) binding. Catalysis depends on E200, which acts as the Proton donor. Position 278 (D278) interacts with Zn(2+). A substrate-binding site is contributed by D279.

It belongs to the metallo-dependent hydrolases superfamily. Adenosine and AMP deaminases family. Adenosine deaminase subfamily. Requires Zn(2+) as cofactor.

The enzyme catalyses adenosine + H2O + H(+) = inosine + NH4(+). It catalyses the reaction 2'-deoxyadenosine + H2O + H(+) = 2'-deoxyinosine + NH4(+). Catalyzes the hydrolytic deamination of adenosine and 2-deoxyadenosine. This chain is Adenosine deaminase, found in Salmonella agona (strain SL483).